The chain runs to 716 residues: Phosphoribosylformylglycinamidine synthase subunit PurL (716 aa).

Residue His-33 is part of the active site. Position 36 (Tyr-36) interacts with ATP. Glu-77 provides a ligand contact to Mg(2+). Residues 78 to 81 and Arg-100 each bind substrate; that span reads SHNH. Catalysis depends on His-79, which acts as the Proton acceptor. Asp-101 lines the Mg(2+) pocket. Gln-225 is a binding site for substrate. Residue Asp-253 coordinates Mg(2+). 297–299 is a substrate binding site; it reads ESQ. 2 residues coordinate ATP: Asn-475 and Gly-512. Asn-513 contacts Mg(2+). Residue Ser-515 participates in substrate binding.

It belongs to the FGAMS family. As to quaternary structure, monomer. Part of the FGAM synthase complex composed of 1 PurL, 1 PurQ and 2 PurS subunits.

Its subcellular location is the cytoplasm. It catalyses the reaction N(2)-formyl-N(1)-(5-phospho-beta-D-ribosyl)glycinamide + L-glutamine + ATP + H2O = 2-formamido-N(1)-(5-O-phospho-beta-D-ribosyl)acetamidine + L-glutamate + ADP + phosphate + H(+). Its pathway is purine metabolism; IMP biosynthesis via de novo pathway; 5-amino-1-(5-phospho-D-ribosyl)imidazole from N(2)-formyl-N(1)-(5-phospho-D-ribosyl)glycinamide: step 1/2. Its function is as follows. Part of the phosphoribosylformylglycinamidine synthase complex involved in the purines biosynthetic pathway. Catalyzes the ATP-dependent conversion of formylglycinamide ribonucleotide (FGAR) and glutamine to yield formylglycinamidine ribonucleotide (FGAM) and glutamate. The FGAM synthase complex is composed of three subunits. PurQ produces an ammonia molecule by converting glutamine to glutamate. PurL transfers the ammonia molecule to FGAR to form FGAM in an ATP-dependent manner. PurS interacts with PurQ and PurL and is thought to assist in the transfer of the ammonia molecule from PurQ to PurL. This Methanosarcina mazei (strain ATCC BAA-159 / DSM 3647 / Goe1 / Go1 / JCM 11833 / OCM 88) (Methanosarcina frisia) protein is Phosphoribosylformylglycinamidine synthase subunit PurL.